Reading from the N-terminus, the 606-residue chain is Vitamin B12 transporter BtuB (606 aa).

The signal sequence occupies residues 1-21 (MKKTLLAVALAPLCLPSQVFA). Positions 28–35 (DVMVVTAN) match the TonB box motif. Positions 40–152 (PIKNVIAPIS…IGGVLNIITA (113 aa)) constitute a TBDR plug domain. The TBDR beta-barrel domain occupies 157–606 (ESVAEVTAGG…SYYATATYKF (450 aa)). The TonB C-terminal box motif lies at 589–606 (ETYNVQERSYYATATYKF).

This sequence belongs to the TonB-dependent receptor family. BtuB (TC 1.B.14.3.1) subfamily.

It is found in the cell outer membrane. Functionally, involved in the active translocation of vitamin B12 (cyanocobalamin) across the outer membrane to the periplasmic space. It derives its energy for transport by interacting with the trans-periplasmic membrane protein TonB. The sequence is that of Vitamin B12 transporter BtuB from Photobacterium profundum (strain SS9).